A 213-amino-acid polypeptide reads, in one-letter code: Proteasome subunit beta (213 aa).

Positions 1-11 are cleaved as a propeptide — removed in mature form; by autocatalysis; it reads MPEQYQESMTG. The active-site Nucleophile is the threonine 12.

This sequence belongs to the peptidase T1B family. The 20S proteasome core is composed of 14 alpha and 14 beta subunits that assemble into four stacked heptameric rings, resulting in a barrel-shaped structure. The two inner rings, each composed of seven catalytic beta subunits, are sandwiched by two outer rings, each composed of seven alpha subunits. The catalytic chamber with the active sites is on the inside of the barrel. Has a gated structure, the ends of the cylinder being occluded by the N-termini of the alpha-subunits. Is capped at one or both ends by the proteasome regulatory ATPase, PAN.

The protein localises to the cytoplasm. It carries out the reaction Cleavage of peptide bonds with very broad specificity.. Its activity is regulated as follows. The formation of the proteasomal ATPase PAN-20S proteasome complex, via the docking of the C-termini of PAN into the intersubunit pockets in the alpha-rings, triggers opening of the gate for substrate entry. Interconversion between the open-gate and close-gate conformations leads to a dynamic regulation of the 20S proteasome proteolysis activity. In terms of biological role, component of the proteasome core, a large protease complex with broad specificity involved in protein degradation. The chain is Proteasome subunit beta from Methanoregula boonei (strain DSM 21154 / JCM 14090 / 6A8).